Reading from the N-terminus, the 338-residue chain is Glycerol-3-phosphate dehydrogenase [NAD(P)+] (338 aa).

Positions 11, 30, and 109 each coordinate NADPH. Residues Lys109, Gly143, and Ser145 each contribute to the sn-glycerol 3-phosphate site. Ala147 provides a ligand contact to NADPH. Sn-glycerol 3-phosphate-binding residues include Lys198, Asp251, Ser261, Arg262, and Asn263. Lys198 serves as the catalytic Proton acceptor. Arg262 serves as a coordination point for NADPH. The NADPH site is built by Val286 and Glu288.

It belongs to the NAD-dependent glycerol-3-phosphate dehydrogenase family.

The protein localises to the cytoplasm. It catalyses the reaction sn-glycerol 3-phosphate + NAD(+) = dihydroxyacetone phosphate + NADH + H(+). It carries out the reaction sn-glycerol 3-phosphate + NADP(+) = dihydroxyacetone phosphate + NADPH + H(+). It participates in membrane lipid metabolism; glycerophospholipid metabolism. In terms of biological role, catalyzes the reduction of the glycolytic intermediate dihydroxyacetone phosphate (DHAP) to sn-glycerol 3-phosphate (G3P), the key precursor for phospholipid synthesis. This chain is Glycerol-3-phosphate dehydrogenase [NAD(P)+], found in Cupriavidus necator (strain ATCC 17699 / DSM 428 / KCTC 22496 / NCIMB 10442 / H16 / Stanier 337) (Ralstonia eutropha).